Here is a 1483-residue protein sequence, read N- to C-terminus: Cystic fibrosis transmembrane conductance regulator (1483 aa).

The Cytoplasmic segment spans residues 1–77; that stretch reads MQRSPLEKAS…KLINALRRCF (77 aa). The chain crosses the membrane as a helical span at residues 78–98; sequence FWRFAFYGILLYLGEVTKAVQ. Residues 81 to 365 enclose the ABC transmembrane type-1 1 domain; the sequence is FAFYGILLYL…WAVQTWYDSL (285 aa). Residues 99–122 are Extracellular-facing; that stretch reads PLLLGRIIASYDPDNKQERSIAIY. Residues 123–146 traverse the membrane as a helical segment; it reads LAIGLCLLFIMRPLLLHPAIFGLH. The Cytoplasmic portion of the chain corresponds to 147–195; it reads HIGMQIRIAMFSLIYKKTLKLSSRVLDKISIGQLVSLLSNNLNKFDEGL. Residues 196–216 form a helical membrane-spanning segment; the sequence is ALAHFVWIAPLQVTLLMGLLW. Over 217-222 the chain is Extracellular; it reads DLLQAS. The chain crosses the membrane as a helical span at residues 223–243; the sequence is AFCGLAFLIVLALVQAGLGRM. Over 244 to 298 the chain is Cytoplasmic; that stretch reads IMKYRDQRAGKINERLVITSEVIENIQSVKAYCWEEAMEKIIENIRQTELKLTRK. A helical membrane pass occupies residues 299 to 319; it reads AAHVRYFNSSAFFFSGFFVVS. At 320 to 339 the chain is on the extracellular side; sequence LSVLPYALIKTIILRKIFTT. A helical transmembrane segment spans residues 340-358; the sequence is ISFCIVLRMAVTRQFPWAV. At 359–859 the chain is on the cytoplasmic side; sequence QTWYDSLGAI…YLRYITVHKN (501 aa). ATP contacts are provided by residues Trp-401, Ser-434, 458–465, and Gln-493; that span reads GSTGAGKT. Residues 423–646 enclose the ABC transporter 1 domain; the sequence is NGDNSLFFSN…RPDFSSKLMG (224 aa). Cys-524 is lipidated: S-palmitoyl cysteine. Phosphoserine occurs at positions 549 and 660. The segment at 654 to 832 is disordered R region; it reads SPERRNSIIT…EEINEEDLKE (179 aa). Phosphoserine; by PKA is present on Ser-670. Ser-686 is subject to Phosphoserine. Residue Lys-688 forms a Glycyl lysine isopeptide (Lys-Gly) (interchain with G-Cter in ubiquitin) linkage. A phosphoserine mark is found at Ser-700 and Ser-712. Thr-717 is modified (phosphothreonine). Phosphoserine occurs at positions 737, 768, 791, 796, and 814. Residues 860–880 traverse the membrane as a helical segment; that stretch reads LIFVLIWCLVIFLAEVAVSLV. The ABC transmembrane type-1 2 domain occupies 860–1156; sequence LIFVLIWCLV…AVNSSIEVDS (297 aa). Residues 881 to 919 lie on the Extracellular side of the membrane; it reads VLWILRNLSSQDKGNSTQSVNSSYAVIFTSTSAYYIFYI. N-linked (GlcNAc...) asparagine glycans are attached at residues Asn-887, Asn-895, and Asn-901. The discontinuously helical transmembrane segment at 920-940 threads the bilayer; sequence YVGVADTLLALGLFRGLPLVH. The Cytoplasmic segment spans residues 941 to 991; it reads TLITVSKILHHKMLHSVLQAPMSTLNTLKAGGILNRFSKDIAILDDLLPLT. The helical transmembrane segment at 992–1012 threads the bilayer; that stretch reads IFDFIQLLLIVIGAVAVVSVL. Over 1013–1014 the chain is Extracellular; that stretch reads QP. The helical transmembrane segment at 1015–1035 threads the bilayer; it reads YIFLATVPVIAAFIILRAYFL. At 1036–1096 the chain is on the cytoplasmic side; sequence HTSQQLKQLE…TANWFLYLST (61 aa). The chain crosses the membrane as a helical span at residues 1097-1117; the sequence is LRWFQMRMEIIFVIFFIAVTF. The Extracellular portion of the chain corresponds to 1118–1131; the sequence is ISILTTGEGEGTVG. The chain crosses the membrane as a helical span at residues 1132 to 1152; sequence IILTLAMNIMGTLQWAVNSSI. The Cytoplasmic portion of the chain corresponds to 1153-1483; the sequence is EVDSLMRSVS…TEDEVQDTRL (331 aa). An ABC transporter 2 domain is found at 1213-1446; the sequence is MTVKDLTAKY…RSAFRQAIGP (234 aa). ATP-binding positions include Tyr-1222 and 1247-1254; that span reads GRTGSGKS. An interaction with GORASP2 region spans residues 1389 to 1483; that stretch reads RTLKQAFADC…TEDEVQDTRL (95 aa). A lipid anchor (S-palmitoyl cysteine) is attached at Cys-1398. The interval 1444 to 1483 is disordered; it reads IGPPERPGLLPHRLSSRQRSPSRIAALKEETEDEVQDTRL. At Ser-1459 the chain carries Phosphoserine. Acidic residues predominate over residues 1473–1483; sequence ETEDEVQDTRL. The PDZ-binding motif lies at 1481 to 1483; it reads TRL.

The protein belongs to the ABC transporter superfamily. ABCC family. CFTR transporter (TC 3.A.1.202) subfamily. In terms of assembly, monomer; does not require oligomerization for channel activity. May form oligomers in the membrane. Interacts with SLC26A3, SLC26A6 and NHERF1. Interacts with SHANK2. Interacts with MYO6. Interacts (via C-terminus) with GOPC (via PDZ domain); this promotes CFTR internalization and thereby decreases channel activity. Interacts with SLC4A7 through NHERF1. Found in a complex with MYO5B and RAB11A. Interacts with ANO1. Interacts with SLC26A8. Interacts with AHCYL1; the interaction increases CFTR activity. Interacts with CSE1L. The core-glycosylated form interacts with GORASP2 (via PDZ GRASP-type 1 domain) in respone to ER stress. Interacts with MARCHF2; the interaction leads to CFTR ubiqtuitination and degradation. Interacts with ADGRG2. N-glycosylated. Post-translationally, phosphorylated; cAMP treatment promotes phosphorylation and activates the channel. Dephosphorylation decreases the ATPase activity (in vitro). Phosphorylation at PKA sites activates the channel. Phosphorylation at PKC sites enhances the response to phosphorylation by PKA. Phosphorylated by AMPK; this inhibits channel activity. In terms of processing, ubiquitinated, leading to its degradation in the lysosome. Deubiquitination by USP10 in early endosomes enhances its endocytic recycling to the cell membrane. Ubiquitinated by RNF185 during ER stress. Ubiquitinated by MARCHF2.

The protein resides in the apical cell membrane. The protein localises to the early endosome membrane. It is found in the cell membrane. It localises to the recycling endosome membrane. Its subcellular location is the endoplasmic reticulum membrane. The protein resides in the nucleus. It catalyses the reaction ATP + H2O + closed Cl(-) channel = ADP + phosphate + open Cl(-) channel.. It carries out the reaction chloride(in) = chloride(out). The enzyme catalyses hydrogencarbonate(in) = hydrogencarbonate(out). The catalysed reaction is ATP + H2O = ADP + phosphate + H(+). Functionally, epithelial ion channel that plays an important role in the regulation of epithelial ion and water transport and fluid homeostasis. Mediates the transport of chloride ions across the cell membrane. Possesses an intrinsic ATPase activity and utilizes ATP to gate its channel; the passive flow of anions through the channel is gated by cycles of ATP binding and hydrolysis by the ATP-binding domains. The ion channel is also permeable to HCO(3)(-); selectivity depends on the extracellular chloride concentration. Exerts its function also by modulating the activity of other ion channels and transporters. Contributes to the regulation of the pH and the ion content of the epithelial fluid layer. Modulates the activity of the epithelial sodium channel (ENaC) complex, in part by regulating the cell surface expression of the ENaC complex. May regulate bicarbonate secretion and salvage in epithelial cells by regulating the transporter SLC4A7. Can inhibit the chloride channel activity of ANO1. Plays a role in the chloride and bicarbonate homeostasis during sperm epididymal maturation and capacitation. In Canis lupus familiaris (Dog), this protein is Cystic fibrosis transmembrane conductance regulator.